Consider the following 248-residue polypeptide: Large ribosomal subunit protein uL30 (248 aa).

N-acetylmethionine is present on Met-1. 4 repeat units span residues 7–18, 19–30, 31–42, and 43–54. Residues 7–54 form a 4 X 12 AA tandem repeats region; sequence KKKEVPAVPETLKKKRRNFAELKIKRLRKKFAQKMLRKARRKLIYEKA. Phosphothreonine is present on Thr-17. Lys-124 carries the post-translational modification N6-acetyllysine. N6-succinyllysine is present on Lys-127. Position 139 is a phosphotyrosine (Tyr-139).

The protein belongs to the universal ribosomal protein uL30 family. As to quaternary structure, component of the large ribosomal subunit. Homodimer. Interacts with DHX33.

The protein localises to the cytoplasm. Its function is as follows. Component of the large ribosomal subunit. The ribosome is a large ribonucleoprotein complex responsible for the synthesis of proteins in the cell. Binds to G-rich structures in 28S rRNA and in mRNAs. Plays a regulatory role in the translation apparatus; inhibits cell-free translation of mRNAs. The protein is Large ribosomal subunit protein uL30 (RPL7) of Homo sapiens (Human).